A 184-amino-acid polypeptide reads, in one-letter code: Protein YrdA (184 aa).

The protein belongs to the gamma-class carbonic anhydrase family.

The chain is Protein YrdA (yrdA) from Escherichia coli (strain K12).